We begin with the raw amino-acid sequence, 277 residues long: MGNGVQPLDPVAIQIGSISVKWYGVIIASAVVIALLLALSEANKRKMDKEIIVDLLIWAIPISIISARIYYVIFEWDFYKNNLGEIVKIWHGGIAIYGALIGAVLTAVIFSRIKKISFWKLADVVAPSLIIAQAIGRWGNFMNQEAHGAETTRAFLEGLHLPEFIINQMYIDGAYYQPTFLYESLWNVLGFIVLLIIRRTKIRSGELFLSYVIWYSFGRFFIEGMRTDSLMWGDFRVSQVLSLLLIVLSIGLIIYRRVKMNPPYYMEDKLGKVAKKK.

The next 4 membrane-spanning stretches (helical) occupy residues 18 to 38 (ISVKWYGVIIASAVVIALLLA), 51 to 71 (IIVDLLIWAIPISIISARIYY), 89 to 109 (IWHGGIAIYGALIGAVLTAVI), and 116 to 136 (ISFWKLADVVAPSLIIAQAIG). Residue Arg-137 participates in a 1,2-diacyl-sn-glycero-3-phospho-(1'-sn-glycerol) binding. Helical transmembrane passes span 177–197 (QPTFLYESLWNVLGFIVLLII), 205–225 (GELFLSYVIWYSFGRFFIEGM), and 235–255 (FRVSQVLSLLLIVLSIGLIIY).

This sequence belongs to the Lgt family.

Its subcellular location is the cell membrane. The catalysed reaction is L-cysteinyl-[prolipoprotein] + a 1,2-diacyl-sn-glycero-3-phospho-(1'-sn-glycerol) = an S-1,2-diacyl-sn-glyceryl-L-cysteinyl-[prolipoprotein] + sn-glycerol 1-phosphate + H(+). Its pathway is protein modification; lipoprotein biosynthesis (diacylglyceryl transfer). Functionally, catalyzes the transfer of the diacylglyceryl group from phosphatidylglycerol to the sulfhydryl group of the N-terminal cysteine of a prolipoprotein, the first step in the formation of mature lipoproteins. In Listeria innocua serovar 6a (strain ATCC BAA-680 / CLIP 11262), this protein is Phosphatidylglycerol--prolipoprotein diacylglyceryl transferase.